The sequence spans 131 residues: Fatty acid-binding protein (131 aa).

(5Z,8Z,11Z,14Z)-eicosatetraenoate is bound by residues R106 and 126–128 (RFY). (9Z)-octadecenoate contacts are provided by residues R106 and 126–128 (RFY).

Belongs to the calycin superfamily. Fatty-acid binding protein (FABP) family.

It is found in the cytoplasm. In terms of biological role, FABPs are thought to play a role in the intracellular transport of long-chain fatty acids and their acyl-CoA esters. The protein is Fatty acid-binding protein of Tyrophagus putrescentiae (Mold mite).